A 610-amino-acid polypeptide reads, in one-letter code: tRNA uridine 5-carboxymethylaminomethyl modification enzyme MnmG (610 aa).

Residue 14–19 (GAGHAG) participates in FAD binding. 274-288 (GPRYCPSIEDKIVKF) contacts NAD(+).

The protein belongs to the MnmG family. Homodimer. Heterotetramer of two MnmE and two MnmG subunits. Requires FAD as cofactor.

Its subcellular location is the cytoplasm. Its function is as follows. NAD-binding protein involved in the addition of a carboxymethylaminomethyl (cmnm) group at the wobble position (U34) of certain tRNAs, forming tRNA-cmnm(5)s(2)U34. The chain is tRNA uridine 5-carboxymethylaminomethyl modification enzyme MnmG from Chlamydia muridarum (strain MoPn / Nigg).